The following is a 931-amino-acid chain: Phosphoenolpyruvate carboxylase (931 aa).

Catalysis depends on residues histidine 138 and lysine 594.

The protein belongs to the PEPCase type 1 family. Requires Mg(2+) as cofactor.

It carries out the reaction oxaloacetate + phosphate = phosphoenolpyruvate + hydrogencarbonate. In terms of biological role, forms oxaloacetate, a four-carbon dicarboxylic acid source for the tricarboxylic acid cycle. This chain is Phosphoenolpyruvate carboxylase, found in Streptococcus agalactiae serotype III (strain NEM316).